The following is a 67-amino-acid chain: Protein AaeX (67 aa).

2 helical membrane passes run 10–30 (FGLSFPPVFFVLMVSLTLFFV) and 43–63 (FVWHPALFNSALFCCLFYLLF).

It belongs to the AaeX family.

It is found in the cell membrane. The polypeptide is Protein AaeX (Pectobacterium atrosepticum (strain SCRI 1043 / ATCC BAA-672) (Erwinia carotovora subsp. atroseptica)).